The following is a 194-amino-acid chain: Ion-translocating oxidoreductase complex subunit B (194 aa).

Positions 1 to 26 (MSSILIAVIAIAALALVFGLILGFAS) are hydrophobic. The region spanning 32–90 (ESDPIVEQIDAILPQTQCGQCGYPGCKPYAEAIANGDMINKCPPGGQATIEKLADLMGV) is the 4Fe-4S domain. [4Fe-4S] cluster contacts are provided by C49, C52, C57, C73, C114, C117, C120, C124, C144, C147, C150, and C154. 4Fe-4S ferredoxin-type domains are found at residues 105–134 (KVAFIHEDMCIGCTKCIQACPVDAIVGGTK) and 135–164 (ALHTVIESECTGCDLCVAPCPTDCIEMIPV).

It belongs to the 4Fe4S bacterial-type ferredoxin family. RnfB subfamily. In terms of assembly, the complex is composed of six subunits: RnfA, RnfB, RnfC, RnfD, RnfE and RnfG. The cofactor is [4Fe-4S] cluster.

It localises to the cell inner membrane. In terms of biological role, part of a membrane-bound complex that couples electron transfer with translocation of ions across the membrane. In Aliivibrio fischeri (strain ATCC 700601 / ES114) (Vibrio fischeri), this protein is Ion-translocating oxidoreductase complex subunit B.